The sequence spans 264 residues: Acetylglutamate kinase (264 aa).

Substrate is bound by residues 50 to 51 (GG), arginine 72, and asparagine 164.

It belongs to the acetylglutamate kinase family. ArgB subfamily.

It localises to the cytoplasm. The enzyme catalyses N-acetyl-L-glutamate + ATP = N-acetyl-L-glutamyl 5-phosphate + ADP. Its pathway is amino-acid biosynthesis; L-arginine biosynthesis; N(2)-acetyl-L-ornithine from L-glutamate: step 2/4. In terms of biological role, catalyzes the ATP-dependent phosphorylation of N-acetyl-L-glutamate. The protein is Acetylglutamate kinase of Moritella profunda.